Here is a 208-residue protein sequence, read N- to C-terminus: Urease accessory protein UreE (208 aa).

The segment at 145–195 (AEAHGHGQAHAHDHHDHDHHDHGHDHAHHDHAHHDHAHDHHGHDHAHDHAH) is disordered.

This sequence belongs to the UreE family.

The protein resides in the cytoplasm. Involved in urease metallocenter assembly. Binds nickel. Probably functions as a nickel donor during metallocenter assembly. The sequence is that of Urease accessory protein UreE from Azorhizobium caulinodans (strain ATCC 43989 / DSM 5975 / JCM 20966 / LMG 6465 / NBRC 14845 / NCIMB 13405 / ORS 571).